The primary structure comprises 45 residues: NLR family pyrin domain-containing protein 2B (45 aa).

In terms of tissue distribution, expressed in all tissues tested, including spleen, lymph node, thymus, tonsil, peripheral blood leukocyte, bone marrow, liver, heart, brain, placenta, lung, skeletal muscle, kidney and pancreas.

The protein resides in the cytoplasm. The protein localises to the nucleus. In terms of biological role, may function as a negative regulator of NF-kappa-B by preventing RELA/p65 phosphorylation at 'Ser-536', thereby inhibiting its transcriptional activity. Through NF-kappa-B regulation may control cytokine release upon Toll-like receptors activation and therefore play a role in modulation of innate immunity. May also play a role in cell cycle progression and apoptotic process. In Homo sapiens (Human), this protein is NLR family pyrin domain-containing protein 2B.